The following is a 38-amino-acid chain: SNGRNAAAGDKPSYWITLAITDCCANPVCNGKHCQGRR.

Residues 1–21 (SNGRNAAAGDKPSYWITLAIT) constitute a propeptide that is removed on maturation. 2 disulfides stabilise this stretch: C23-C29 and C24-C34. Q35 is modified (glutamine amide).

The protein belongs to the conotoxin A superfamily. Post-translationally, the two analogs ([DelQ14]LvIC and [D1G,DelQ14]LvIC) are amidated at their N-terminal Cys. Expressed by the venom gland.

Its subcellular location is the secreted. In terms of biological role, alpha-conotoxins bind to the nicotinic acetylcholine receptors (nAChR) and inhibit them. This synthetic peptide inhibits rat alpha-6/alpha-3-beta-4 nAChR (IC(50)=3.3 uM). In Conus lividus (Livid cone), this protein is Alpha-conotoxin LvIC.